Consider the following 407-residue polypeptide: Peptidase T (407 aa).

Position 77 (His77) interacts with Zn(2+). Residue Asp79 is part of the active site. A Zn(2+)-binding site is contributed by Asp138. Glu172 functions as the Proton acceptor in the catalytic mechanism. 3 residues coordinate Zn(2+): Glu173, Asp195, and His377.

This sequence belongs to the peptidase M20B family. Zn(2+) serves as cofactor.

It localises to the cytoplasm. It catalyses the reaction Release of the N-terminal residue from a tripeptide.. Its function is as follows. Cleaves the N-terminal amino acid of tripeptides. The chain is Peptidase T from Aeromonas salmonicida (strain A449).